Here is a 470-residue protein sequence, read N- to C-terminus: Siroheme synthase (470 aa).

The segment at 1 to 203 is precorrin-2 dehydrogenase /sirohydrochlorin ferrochelatase; that stretch reads MDYLPIFVEL…GQIQQAEKQL (203 aa). NAD(+)-binding positions include 22–23 and 43–44; these read EV and PE. Residue serine 128 is modified to Phosphoserine. The uroporphyrinogen-III C-methyltransferase stretch occupies residues 214-470; it reads GELALVGAGP…ISRPAVVDFA (257 aa). Proline 223 contributes to the S-adenosyl-L-methionine binding site. The Proton acceptor role is filled by aspartate 246. Residue lysine 268 is the Proton donor of the active site. S-adenosyl-L-methionine contacts are provided by residues 299-301, isoleucine 304, 329-330, methionine 381, and glycine 410; these read GGD and TA.

It in the N-terminal section; belongs to the precorrin-2 dehydrogenase / sirohydrochlorin ferrochelatase family. In the C-terminal section; belongs to the precorrin methyltransferase family.

It carries out the reaction uroporphyrinogen III + 2 S-adenosyl-L-methionine = precorrin-2 + 2 S-adenosyl-L-homocysteine + H(+). It catalyses the reaction precorrin-2 + NAD(+) = sirohydrochlorin + NADH + 2 H(+). The enzyme catalyses siroheme + 2 H(+) = sirohydrochlorin + Fe(2+). The protein operates within cofactor biosynthesis; adenosylcobalamin biosynthesis; precorrin-2 from uroporphyrinogen III: step 1/1. Its pathway is cofactor biosynthesis; adenosylcobalamin biosynthesis; sirohydrochlorin from precorrin-2: step 1/1. It functions in the pathway porphyrin-containing compound metabolism; siroheme biosynthesis; precorrin-2 from uroporphyrinogen III: step 1/1. It participates in porphyrin-containing compound metabolism; siroheme biosynthesis; siroheme from sirohydrochlorin: step 1/1. The protein operates within porphyrin-containing compound metabolism; siroheme biosynthesis; sirohydrochlorin from precorrin-2: step 1/1. Its function is as follows. Multifunctional enzyme that catalyzes the SAM-dependent methylations of uroporphyrinogen III at position C-2 and C-7 to form precorrin-2 via precorrin-1. Then it catalyzes the NAD-dependent ring dehydrogenation of precorrin-2 to yield sirohydrochlorin. Finally, it catalyzes the ferrochelation of sirohydrochlorin to yield siroheme. The polypeptide is Siroheme synthase (Photorhabdus laumondii subsp. laumondii (strain DSM 15139 / CIP 105565 / TT01) (Photorhabdus luminescens subsp. laumondii)).